A 253-amino-acid chain; its full sequence is Cyclin-C1-2 (253 aa).

Belongs to the cyclin family. Cyclin C subfamily.

This chain is Cyclin-C1-2 (CYCC1-2), found in Arabidopsis thaliana (Mouse-ear cress).